The sequence spans 594 residues: Protein FAM200C (594 aa).

The chain is Protein FAM200C (FAM200C) from Bos taurus (Bovine).